The primary structure comprises 56 residues: Potassium channel toxin alpha-KTx 9.1 (56 aa).

The signal sequence occupies residues 1 to 28 (MSRLFTLVLIVLAMNVMMAIISDPVVEA). Cystine bridges form between Cys31-Cys47, Cys34-Cys52, and Cys38-Cys54.

In terms of tissue distribution, expressed by the venom gland.

It is found in the secreted. Its function is as follows. Blocks small conductance calcium-activated potassium channels (KCNN, SK). Weakly inhibits the Kv7.1/KCNQ1 channel (10 uM of the toxin inhibits currents by 23.3%). Low toxicity by intracerebroventricular injection into mice. In Olivierus martensii (Manchurian scorpion), this protein is Potassium channel toxin alpha-KTx 9.1.